Consider the following 496-residue polypeptide: Glycerol kinase (496 aa).

Residue T12 coordinates ADP. Residues T12, T13, and S14 each contribute to the ATP site. T12 serves as a coordination point for sn-glycerol 3-phosphate. R16 lines the ADP pocket. Residues R82, E83, and Y134 each coordinate sn-glycerol 3-phosphate. Residues R82, E83, and Y134 each coordinate glycerol. The residue at position 230 (H230) is a Phosphohistidine; by HPr. D244 is a binding site for sn-glycerol 3-phosphate. The glycerol site is built by D244 and Q245. Positions 266 and 309 each coordinate ADP. The ATP site is built by T266, G309, Q313, and G410. The ADP site is built by G410 and N414.

Belongs to the FGGY kinase family. As to quaternary structure, homotetramer and homodimer (in equilibrium). In terms of processing, the phosphoenolpyruvate-dependent sugar phosphotransferase system (PTS), including enzyme I, and histidine-containing protein (HPr) are required for the phosphorylation, which leads to the activation of the enzyme.

It catalyses the reaction glycerol + ATP = sn-glycerol 3-phosphate + ADP + H(+). It participates in polyol metabolism; glycerol degradation via glycerol kinase pathway; sn-glycerol 3-phosphate from glycerol: step 1/1. With respect to regulation, activated by phosphorylation and inhibited by fructose 1,6-bisphosphate (FBP). Functionally, key enzyme in the regulation of glycerol uptake and metabolism. Catalyzes the phosphorylation of glycerol to yield sn-glycerol 3-phosphate. The polypeptide is Glycerol kinase (Geobacillus sp. (strain WCH70)).